The primary structure comprises 303 residues: Polyisoprenyl-teichoic acid--peptidoglycan teichoic acid transferase TagU (303 aa).

Residues 1–6 lie on the Cytoplasmic side of the membrane; sequence MSKGKK. The chain crosses the membrane as a helical; Signal-anchor for type II membrane protein span at residues 7–27; the sequence is IFAIIFGIILVLFLAVVGMGA. Residues 28–303 lie on the Extracellular side of the membrane; the sequence is KLYWDVSKSM…QELKNQLNTK (276 aa).

This sequence belongs to the LytR/CpsA/Psr (LCP) family.

It localises to the cell membrane. It participates in cell wall biogenesis. Its function is as follows. May catalyze the final step in cell wall teichoic acid biosynthesis, the transfer of the anionic cell wall polymers (APs) from their lipid-linked precursor to the cell wall peptidoglycan (PG). This chain is Polyisoprenyl-teichoic acid--peptidoglycan teichoic acid transferase TagU, found in Enterococcus faecalis (strain ATCC 700802 / V583).